Consider the following 357-residue polypeptide: Peptide chain release factor 1 (357 aa).

An N5-methylglutamine modification is found at glutamine 236.

The protein belongs to the prokaryotic/mitochondrial release factor family. Methylated by PrmC. Methylation increases the termination efficiency of RF1.

The protein localises to the cytoplasm. Its function is as follows. Peptide chain release factor 1 directs the termination of translation in response to the peptide chain termination codons UAG and UAA. This is Peptide chain release factor 1 from Mycobacterium sp. (strain JLS).